The chain runs to 375 residues: DnaJ homolog subfamily B member 12 (375 aa).

Residue Met1 is modified to N-acetylmethionine. The Cytoplasmic segment spans residues 1-243 (MESNKDEAER…DRRDNQGDGG (243 aa)). The segment at 45–92 (ALIESLNQKPQTAGDQPPPTDTTHATHRKAGGTDAPSANGEAGGESTK) is disordered. The segment covering 49–58 (SLNQKPQTAG) has biased composition (polar residues). A J domain is found at 112-176 (YEILGVSRGA…RKQYDQFGDD (65 aa)). His185 is modified (pros-methylhistidine). Residues 244 to 264 (LGVFVQLMPILILILVSALSQ) traverse the membrane as a helical segment. At 265–375 (LMVSSPPYSL…LSEVQASLHG (111 aa)) the chain is on the lumenal side.

This sequence belongs to the DnaJ family. DNAJB12/DNAJB14 subfamily. Homodimer and homotetramer. Interacts (via J domain) with HSPA8/Hsc70. Forms a multiprotein complex, at least composed of DNAJB12, DNAJB14, HSPA8/Hsc70 and SGTA; interaction with DNAJB14 and HSPA8/Hsc70 is direct. Post-translationally, methylated at His-185 by METTL9.

The protein resides in the endoplasmic reticulum membrane. Its subcellular location is the nucleus membrane. Functionally, acts as a co-chaperone with HSPA8/Hsc70; required to promote protein folding and trafficking, prevent aggregation of client proteins, and promote unfolded proteins to endoplasmic reticulum-associated degradation (ERAD) pathway. Acts by determining HSPA8/Hsc70's ATPase and polypeptide-binding activities. Can also act independently of HSPA8/Hsc70: together with DNAJB14, acts as a chaperone that promotes maturation of potassium channels KCND2 and KCNH2 by stabilizing nascent channel subunits and assembling them into tetramers. While stabilization of nascent channel proteins is dependent on HSPA8/Hsc70, the process of oligomerization of channel subunits is independent of HSPA8/Hsc70. When overexpressed, forms membranous structures together with DNAJB14 and HSPA8/Hsc70 within the nucleus; the role of these structures, named DJANGOs, is still unclear. Its function is as follows. (Microbial infection) In case of infection by polyomavirus, involved in the virus endoplasmic reticulum membrane penetration and infection. The polypeptide is DnaJ homolog subfamily B member 12 (Homo sapiens (Human)).